The primary structure comprises 225 residues: uncharacterized protein (225 aa).

A divalent metal cation-binding residues include glutamate 69, glutamate 71, and aspartate 100.

It belongs to the FAH family.

This is an uncharacterized protein from Pyrococcus abyssi (strain GE5 / Orsay).